The following is a 120-amino-acid chain: Anti-adapter protein IraM (120 aa).

This sequence belongs to the IraM/RssC family.

The protein localises to the cytoplasm. Functionally, involved in the stabilization of the sigma stress factor RpoS. The protein is Anti-adapter protein IraM of Salmonella choleraesuis (strain SC-B67).